Reading from the N-terminus, the 489-residue chain is Glutamyl-tRNA(Gln) amidotransferase subunit A (489 aa).

Residues Lys79 and Ser158 each act as charge relay system in the active site. The Acyl-ester intermediate role is filled by Ser182.

This sequence belongs to the amidase family. GatA subfamily. In terms of assembly, heterotrimer of A, B and C subunits.

The enzyme catalyses L-glutamyl-tRNA(Gln) + L-glutamine + ATP + H2O = L-glutaminyl-tRNA(Gln) + L-glutamate + ADP + phosphate + H(+). In terms of biological role, allows the formation of correctly charged Gln-tRNA(Gln) through the transamidation of misacylated Glu-tRNA(Gln) in organisms which lack glutaminyl-tRNA synthetase. The reaction takes place in the presence of glutamine and ATP through an activated gamma-phospho-Glu-tRNA(Gln). This chain is Glutamyl-tRNA(Gln) amidotransferase subunit A, found in Anaplasma marginale (strain Florida).